Consider the following 761-residue polypeptide: Complement factor B (761 aa).

A signal peptide spans 1 to 25 (MGIGHNPRLCLVPLILGLLCGGVGM). Sushi domains lie at 35 to 100 (SPCS…ECKA), 101 to 160 (IRCP…ICDD), and 163 to 220 (TYCP…SCQD). 6 disulfide bridges follow: cysteine 37–cysteine 76, cysteine 62–cysteine 98, cysteine 103–cysteine 145, cysteine 131–cysteine 158, cysteine 165–cysteine 205, and cysteine 191–cysteine 218. Asparagine 122 and asparagine 142 each carry an N-linked (GlcNAc...) asparagine glycan. Positions 270–469 (NIYLVLDGSD…NLEDVFVQML (200 aa)) constitute a VWFA domain. Residues serine 278 and serine 280 each coordinate Mg(2+). Asparagine 285 carries an N-linked (GlcNAc...) asparagine glycan. Threonine 353 serves as a coordination point for Mg(2+). N-linked (GlcNAc...) asparagine glycosylation occurs at asparagine 378. In terms of domain architecture, Peptidase S1 spans 477-754 (LCGMVWEHKD…VLPWLKEKLQ (278 aa)). 5 cysteine pairs are disulfide-bonded: cysteine 478–cysteine 596, cysteine 511–cysteine 527, cysteine 599–cysteine 615, cysteine 656–cysteine 682, and cysteine 695–cysteine 725. Residues histidine 526 and aspartate 576 each act as charge relay system in the active site. The active-site Charge relay system is serine 699.

This sequence belongs to the peptidase S1 family. As to quaternary structure, monomer. Interacts with complement C3b; this interaction is dependent on the presence of Mg(2+). In terms of assembly, catalytic component of the C3 convertase of the alternative complement pathway, also named C3bBb, composed of complement factor B Bb and complement C3b. Catalytic component of the C5 convertase of the alternative complement pathway, also named C3bBb3b, composed of complement factor B Bb and additional molecules of complement C3b. Interacts to CFP; this interaction contributes to the stabilization of the active C3-convertase enzyme complex. The cofactor is Mg(2+). Mn(2+) serves as cofactor. In terms of processing, cleaved by CFD following activation of the alternative complement system, generating Ba and Bb chains. Cleavage and activation takes place when CFB is already associated with complement C3b.

Its subcellular location is the secreted. The protein localises to the cell surface. The enzyme catalyses Cleavage of Arg-|-Ser bond in complement component C3 alpha-chain to yield C3a and C3b, and Arg-|-Xaa bond in complement component C5 alpha-chain to yield C5a and C5b.. Precursor of the catalytic component of the C3 and C5 convertase complexes of the alternative pathway of the complement system, a cascade of proteins that leads to phagocytosis and breakdown of pathogens and signaling that strengthens the adaptive immune system. The alternative complement pathway acts as an amplification loop that enhances other complement pathways (classical, lectin and GZMK) by promoting formation of additional C3 and C5 convertases. CFB is cleaved and activated by CFD to generate Ba and Bb chains; Bb chain constituting the catalytic component of the C3 and C5 convertases. Its function is as follows. Serine protease component of the complement C3 and C5 convertase complexes of the alternative complement pathway. Following cleavage and activation by factor D (CFD), forms the C3 convertase together with complement C3b. As part of the C3 convertase, cleaves and activates C3 into C3a anaphylatoxin and C3b opsonin, the next components of the complement pathways. When an additional complement C3b molecule binds to the C3 convertase, forms the C5 convertase, which cleaves and activates C5 into C5a anaphylatoxin and C5b component of the membrane attack complex. In terms of biological role, involved in proliferation and differentiation of preactivated B-lymphocytes, rapid spreading of peripheral blood monocytes, stimulation of lymphocyte blastogenesis and lysis of erythrocytes. In Bos taurus (Bovine), this protein is Complement factor B (CFB).